The primary structure comprises 110 residues: Large ribosomal subunit protein uL22 (110 aa).

It belongs to the universal ribosomal protein uL22 family. In terms of assembly, part of the 50S ribosomal subunit.

Functionally, this protein binds specifically to 23S rRNA; its binding is stimulated by other ribosomal proteins, e.g. L4, L17, and L20. It is important during the early stages of 50S assembly. It makes multiple contacts with different domains of the 23S rRNA in the assembled 50S subunit and ribosome. The globular domain of the protein is located near the polypeptide exit tunnel on the outside of the subunit, while an extended beta-hairpin is found that lines the wall of the exit tunnel in the center of the 70S ribosome. The chain is Large ribosomal subunit protein uL22 from Buchnera aphidicola subsp. Acyrthosiphon pisum (strain 5A).